A 464-amino-acid chain; its full sequence is tRNA modification GTPase MnmE (464 aa).

3 residues coordinate (6S)-5-formyl-5,6,7,8-tetrahydrofolate: Arg27, Glu90, and Lys129. The 163-residue stretch at 222 to 384 (GVALVLAGSV…LYDKIRALIS (163 aa)) folds into the TrmE-type G domain. GTP contacts are provided by residues 232 to 237 (NAGKSS), 251 to 257 (SSYPGTT), and 276 to 279 (DTAG). Mg(2+) is bound by residues Ser236 and Thr257. Residue Lys464 coordinates (6S)-5-formyl-5,6,7,8-tetrahydrofolate.

Belongs to the TRAFAC class TrmE-Era-EngA-EngB-Septin-like GTPase superfamily. TrmE GTPase family. Homodimer. Heterotetramer of two MnmE and two MnmG subunits. K(+) serves as cofactor.

The protein localises to the cytoplasm. Its function is as follows. Exhibits a very high intrinsic GTPase hydrolysis rate. Involved in the addition of a carboxymethylaminomethyl (cmnm) group at the wobble position (U34) of certain tRNAs, forming tRNA-cmnm(5)s(2)U34. The polypeptide is tRNA modification GTPase MnmE (Borreliella burgdorferi (strain ATCC 35210 / DSM 4680 / CIP 102532 / B31) (Borrelia burgdorferi)).